The chain runs to 1024 residues: Beta-galactosidase (1024 aa).

2 residues coordinate substrate: N103 and D202. D202 is a Na(+) binding site. 3 residues coordinate Mg(2+): E417, H419, and E462. Substrate is bound by residues E462 and 538-541 (EYAH). The active-site Proton donor is E462. E538 serves as the catalytic Nucleophile. Position 598 (N598) interacts with Mg(2+). Residues F602 and N605 each coordinate Na(+). Residues N605 and W1000 each coordinate substrate.

The protein belongs to the glycosyl hydrolase 2 family. Homotetramer. Mg(2+) serves as cofactor. Na(+) is required as a cofactor.

It carries out the reaction Hydrolysis of terminal non-reducing beta-D-galactose residues in beta-D-galactosides.. This Escherichia coli (strain ATCC 8739 / DSM 1576 / NBRC 3972 / NCIMB 8545 / WDCM 00012 / Crooks) protein is Beta-galactosidase.